We begin with the raw amino-acid sequence, 167 residues long: Lipoprotein signal peptidase (167 aa).

Transmembrane regions (helical) follow at residues 10 to 30, 68 to 88, and 98 to 118; these read LIWL…KAWV, WQMW…TFWL, and SALP…DRFL. Active-site residues include Asp-124 and Asp-142. A helical transmembrane segment spans residues 138-158; that stretch reads FNLADSAIVAGAIGIGLLSLF.

It belongs to the peptidase A8 family.

Its subcellular location is the cell inner membrane. It catalyses the reaction Release of signal peptides from bacterial membrane prolipoproteins. Hydrolyzes -Xaa-Yaa-Zaa-|-(S,diacylglyceryl)Cys-, in which Xaa is hydrophobic (preferably Leu), and Yaa (Ala or Ser) and Zaa (Gly or Ala) have small, neutral side chains.. It participates in protein modification; lipoprotein biosynthesis (signal peptide cleavage). Functionally, this protein specifically catalyzes the removal of signal peptides from prolipoproteins. The chain is Lipoprotein signal peptidase from Xylella fastidiosa (strain M23).